We begin with the raw amino-acid sequence, 358 residues long: Alanine racemase (358 aa).

Lysine 34 (proton acceptor; specific for D-alanine) is an active-site residue. Lysine 34 carries the post-translational modification N6-(pyridoxal phosphate)lysine. Arginine 129 lines the substrate pocket. Residue tyrosine 254 is the Proton acceptor; specific for L-alanine of the active site. Methionine 302 lines the substrate pocket.

The protein belongs to the alanine racemase family. Requires pyridoxal 5'-phosphate as cofactor.

The catalysed reaction is L-alanine = D-alanine. Its pathway is amino-acid biosynthesis; D-alanine biosynthesis; D-alanine from L-alanine: step 1/1. In terms of biological role, catalyzes the interconversion of L-alanine and D-alanine. May also act on other amino acids. The protein is Alanine racemase (alr) of Hamiltonella defensa subsp. Acyrthosiphon pisum (strain 5AT).